A 101-amino-acid polypeptide reads, in one-letter code: Putative membrane protein insertion efficiency factor (101 aa).

Belongs to the UPF0161 family.

It localises to the cell membrane. In terms of biological role, could be involved in insertion of integral membrane proteins into the membrane. In Lacticaseibacillus casei (strain BL23) (Lactobacillus casei), this protein is Putative membrane protein insertion efficiency factor.